A 67-amino-acid chain; its full sequence is MGQKTAVGSLLKSIGNSGQGKVVAGWGAVPVMAFVGVLLLVFLVILLQIYNQSLLLQGFSVDWNGVN.

A helical transmembrane segment spans residues 27–47 (GAVPVMAFVGVLLLVFLVILL).

The protein belongs to the PsbH family. In terms of assembly, PSII is composed of 1 copy each of membrane proteins PsbA, PsbB, PsbC, PsbD, PsbE, PsbF, PsbH, PsbI, PsbJ, PsbK, PsbL, PsbM, PsbT, PsbX, PsbY, Psb30/Ycf12, peripheral proteins PsbO, CyanoQ (PsbQ), PsbU, PsbV and a large number of cofactors. It forms dimeric complexes.

The protein resides in the cellular thylakoid membrane. One of the components of the core complex of photosystem II (PSII), required for its stability and/or assembly. PSII is a light-driven water:plastoquinone oxidoreductase that uses light energy to abstract electrons from H(2)O, generating O(2) and a proton gradient subsequently used for ATP formation. It consists of a core antenna complex that captures photons, and an electron transfer chain that converts photonic excitation into a charge separation. In Prochlorococcus marinus (strain SARG / CCMP1375 / SS120), this protein is Photosystem II reaction center protein H.